Here is a 694-residue protein sequence, read N- to C-terminus: Pentatricopeptide repeat-containing protein At3g12770 (694 aa).

13 PPR repeats span residues 52–82 (SGFLITKLIHASSSFGDITFARQVFDDLPRP), 83–117 (QIFPWNAIIRGYSRNNHFQDALLMYSNMQLARVSP), 118–152 (DSFTFPHLLKACSGLSHLQMGRFVHAQVFRLGFDA), 153–183 (DVFVQNGLIALYAKCRRLGSARTVFEGLPLP), 186–220 (TIVSWTAIVSAYAQNGEPMEALEIFSQMRKMDVKP), 221–255 (DWVALVSVLNAFTCLQDLKQGRSIHASVVKMGLEI), 256–286 (EPDLLISLNTMYAKCGQVATAKILFDKMKSP), 287–321 (NLILWNAMISGYAKNGYAREAIDMFHEMINKDVRP), 322–356 (DTISITSAISACAQVGSLEQARSMYEYVGRSDYRD), 357–387 (DVFISSALIDMFAKCGSVEGARLVFDRTLDR), 388–422 (DVVVWSAMIVGYGLHGRAREAISLYRAMERGGVHP), 423–457 (NDVTFLGLLMACNHSGMVREGWWFFNRMADHKINP), and 458–488 (QQQHYACVIDLLGRAGHLDQAYEVIKCMPVQ). A type E motif region spans residues 493–568 (VWGALLSACK…DVGCSWVEVR (76 aa)). The type E(+) motif stretch occupies residues 569 to 599 (GRLEAFRVGDKSHPRYEEIERQVEWIESRLK). The interval 600-694 (EGGFVANKDA…DGVCSCGDYW (95 aa)) is type DYW motif.

This sequence belongs to the PPR family. PCMP-H subfamily.

This chain is Pentatricopeptide repeat-containing protein At3g12770 (PCMP-H43), found in Arabidopsis thaliana (Mouse-ear cress).